Reading from the N-terminus, the 175-residue chain is Transcriptional repressor NrdR (175 aa).

A zinc finger lies at 3–32 (CPYCSHPDSKVIDSRDVDDGVRRRRECVVC). An ATP-cone domain is found at 47–137 (LFVVKKDQRR…VYREFTDITQ (91 aa)).

It belongs to the NrdR family. Zn(2+) serves as cofactor.

Negatively regulates transcription of bacterial ribonucleotide reductase nrd genes and operons by binding to NrdR-boxes. The polypeptide is Transcriptional repressor NrdR (Dehalococcoides mccartyi (strain CBDB1)).